Consider the following 391-residue polypeptide: Multidrug resistance protein MdtL (391 aa).

Transmembrane regions (helical) follow at residues phenylalanine 4–valine 24, isoleucine 42–alanine 62, proline 69–glutamate 89, leucine 93–phenylalanine 113, glycine 134–phenylalanine 154, serine 158–leucine 178, phenylalanine 203–valine 222, alanine 245–phenylalanine 265, threonine 269–proline 289, valine 293–methionine 313, leucine 331–isoleucine 351, and methionine 356–alanine 376.

Belongs to the major facilitator superfamily. DHA1 family. MdtL (TC 2.A.1.2.22) subfamily.

The protein resides in the cell inner membrane. Its function is as follows. Confers resistance to chloramphenicol. The sequence is that of Multidrug resistance protein MdtL from Escherichia coli O81 (strain ED1a).